A 76-amino-acid chain; its full sequence is UPF0352 protein PC1_1633 (76 aa).

It belongs to the UPF0352 family.

The chain is UPF0352 protein PC1_1633 from Pectobacterium carotovorum subsp. carotovorum (strain PC1).